A 459-amino-acid chain; its full sequence is uncharacterized protein (459 aa).

Positions 7–65 constitute a TRAM domain; that stretch reads PVNKNEIYTLTFEDLTHEGNGVAKIEGYPLFVPEVLPDEQAKVKVVKVNKNFGFGKLLE. [4Fe-4S] cluster-binding residues include Cys78, Cys82, Cys85, and Cys164. Positions 288, 317, 338, and 386 each coordinate S-adenosyl-L-methionine. The Nucleophile role is filled by Cys413.

Belongs to the class I-like SAM-binding methyltransferase superfamily. RNA M5U methyltransferase family.

This is an uncharacterized protein from Oceanobacillus iheyensis (strain DSM 14371 / CIP 107618 / JCM 11309 / KCTC 3954 / HTE831).